We begin with the raw amino-acid sequence, 7524 residues long: Mucin-19 (7524 aa).

The N-terminal stretch at 1 to 20 is a signal peptide; it reads MKLILLYLAVVLCFVGKGAA. The tract at residues 20 to 47 is disordered; the sequence is ARSPTTTRTPTPSTSEKASHVPEATPTY. A compositionally biased stretch (low complexity) spans 21 to 34; the sequence is RSPTTTRTPTPSTS. The VWFD 1 domain maps to 55–225; it reads GEATMWGKDK…VCEDGVQYCD (171 aa). Cys79 and Cys224 form a disulfide bridge. Positions 298 to 353 constitute a TIL domain; sequence CPGKHIYKECGPSNPPTCSNVAPFQDSECVSGCTCPEGYLLDDIGEKGKCVLKEKC. VWFD domains follow at residues 392-568 and 851-1025; these read GICK…EGSP and STCH…QECS. 6 disulfide bridges follow: Cys394–Cys529, Cys434–Cys442, Cys853–Cys989, Cys875–Cys1024, Cys884–Cys986, and Cys900–Cys907. Low complexity predominate over residues 1244–1261; the sequence is AAATRASSSTSGSVETSV. Disordered stretches follow at residues 1244–7217 and 7249–7297; these read AAAT…SSLA and SVIK…CPDS. Residues 1262 to 1289 are compositionally biased toward polar residues; it reads PATTSTSKAQAHITTASSTETSALNSTA. Composition is skewed to low complexity over residues 1320-7099 and 7112-7217; these read PAVS…AGSG and STSG…SSLA. Repeat copies occupy residues 1321–1483, 1484–1646, 1647–1809, 1810–1972, 1973–2135, 2136–2298, 2299–2461, 2462–2624, 2625–2787, 2788–2950, 2951–3113, 3114–3276, 3277–3439, 3440–3602, 3603–3765, 3766–3928, 3929–4091, 4092–4254, 4255–4417, 4418–4580, 4581–4743, 4744–4906, 4907–5069, 5070–5232, 5233–5395, 5396–5558, 5559–5721, 5722–5884, 5885–6047, 6048–6210, 6211–6373, 6374–6536, 6537–6699, 6700–6862, 6863–7025, and 7026–7188. The interval 1321 to 7188 is approximate repeats; the sequence is AVSTTSAGST…AETAGSTTGP (5868 aa). A compositionally biased stretch (polar residues) spans 7261–7291; that stretch reads AKSNETTGRTTSMPASTSVAPGVTTSPNISQ. VWFC domains lie at 7302–7368 and 7370–7432; these read PVCH…GHCE and RTCL…YKCK. Disulfide bonds link Cys7435-Cys7482, Cys7449-Cys7496, Cys7458-Cys7512, and Cys7462-Cys7514. A CTCK domain is found at 7435-7519; that stretch reads CRTTPVNVTV…TTCSCRDQCE (85 aa).

Specifically expressed in sublingual salivary glands. Expressed by mucous cells of the submandibular gland and submucosal gland of the trachea. Expression is altered in sld (sublingual gland differentiation arrest) mutants.

It is found in the secreted. Functionally, may function in ocular mucus homeostasis. The protein is Mucin-19 (Muc19) of Mus musculus (Mouse).